Consider the following 267-residue polypeptide: Probable ribosomal RNA small subunit methyltransferase A (267 aa).

S-adenosyl-L-methionine contacts are provided by L12, G37, E58, D83, and N100.

Belongs to the class I-like SAM-binding methyltransferase superfamily. rRNA adenine N(6)-methyltransferase family. RsmA subfamily.

The protein resides in the cytoplasm. In terms of biological role, specifically dimethylates two adjacent adenosines in the loop of a conserved hairpin near the 3'-end of 16S rRNA in the 30S particle. May play a critical role in biogenesis of 30S subunits. This Methanococcus maripaludis (strain DSM 14266 / JCM 13030 / NBRC 101832 / S2 / LL) protein is Probable ribosomal RNA small subunit methyltransferase A.